Reading from the N-terminus, the 154-residue chain is Anaerobic ribonucleoside-triphosphate reductase-activating protein (154 aa).

Residues Cys-26, Cys-30, and Cys-33 each contribute to the [4Fe-4S] cluster site. S-adenosyl-L-methionine contacts are provided by residues 32–34 and Gly-74; that span reads GCY.

It belongs to the organic radical-activating enzymes family. As to quaternary structure, forms a tetramer composed of two NrdD and two NrdG subunits. [4Fe-4S] cluster is required as a cofactor.

The protein localises to the cytoplasm. The catalysed reaction is glycyl-[protein] + reduced [flavodoxin] + S-adenosyl-L-methionine = glycin-2-yl radical-[protein] + semiquinone [flavodoxin] + 5'-deoxyadenosine + L-methionine + H(+). In terms of biological role, activation of anaerobic ribonucleoside-triphosphate reductase under anaerobic conditions by generation of an organic free radical, using S-adenosylmethionine and reduced flavodoxin as cosubstrates to produce 5'-deoxy-adenosine. The chain is Anaerobic ribonucleoside-triphosphate reductase-activating protein (nrdG) from Salmonella typhimurium (strain LT2 / SGSC1412 / ATCC 700720).